Reading from the N-terminus, the 377-residue chain is Compound eye opsin BCRH2 (377 aa).

The Extracellular segment spans residues 1–53 (MTNATGPQMAYYGAASMDFGYPEGVSIVDFVRPEIKPYVHQHWYNYPPVNPMW). A glycan (N-linked (GlcNAc...) asparagine) is linked at N3. Residues 54–78 (HYLLGVIYLFLGTVSIFGNGLVIYL) form a helical membrane-spanning segment. Residues 79–90 (FNKSAALRTPAN) lie on the Cytoplasmic side of the membrane. The chain crosses the membrane as a helical span at residues 91–115 (ILVVNLALSDLIMLTTNVPFFTYNC). Residues 116–131 (FSGGVWMFSPQYCEIY) lie on the Extracellular side of the membrane. A disulfide bond links C128 and C205. The chain crosses the membrane as a helical span at residues 132–151 (ACLGAITGVCSIWLLCMISF). Residues 152–170 (DRYNIICNGFNGPKLTTGK) lie on the Cytoplasmic side of the membrane. Residues 171–194 (AVVFALISWVIAIGCALPPFFGWG) form a helical membrane-spanning segment. Over 195–218 (NYILEGILDSCSYDYLTQDFNTFS) the chain is Extracellular. Residues 219-246 (YNIFIFVFDYFLPAAIIVFSYVFIVKAI) traverse the membrane as a helical segment. Topologically, residues 247-281 (FAHEAAMRAQAKKMNVSTLRSNEADAQRAEIRIAK) are cytoplasmic. Residues 282 to 305 (TALVNVSLWFICWTPYALISLKGV) form a helical membrane-spanning segment. The Extracellular portion of the chain corresponds to 306 to 313 (MGDTSGIT). A helical transmembrane segment spans residues 314 to 338 (PLVSTLPALLAKSCSCYNPFVYAIS). An N6-(retinylidene)lysine modification is found at K325. Residues 339-377 (HPKYRLAITQHLPWFCVHETETKSNDDSQSNSTVAQDKA) are Cytoplasmic-facing.

This sequence belongs to the G-protein coupled receptor 1 family. Opsin subfamily. In terms of processing, phosphorylated on some or all of the serine and threonine residues present in the C-terminal region. As to expression, expressed in all of the seven retinular cells (R1-R7) forming the main rhabdom in each ommatidium.

The protein localises to the membrane. Visual pigments are the light-absorbing molecules that mediate vision. They consist of an apoprotein, opsin, covalently linked to cis-retinal. This opsin produces visual pigments with maximal absorption in the blue-green region of the spectrum. This Hemigrapsus sanguineus (Asian shore crab) protein is Compound eye opsin BCRH2.